The following is a 374-amino-acid chain: MRAPMLQKQQAPRMDTPPPEERLEKQNEKLNNQEEETEFKELDGLREALANLRGLSEEERSEKAMLRSRIEEQSQLICILKRRSDEALERCQILELLNAELEEKMMQEAEKLKAQGEYSRKLEERFMTLAANHELMLRFKDEYKSENIKLREENEKLRLENSSLFSQALKDEEAKVLQLTVRCEALTGELETLKERCAQDACQAQAREKELLELQSQQACTHTKETEQLRSQLQTLKQQHQQAVEQIAKAEETHSSLSQELQARLQTVTREKEELLQLSIERGKVLQNKQAEICQLEEKLEIANEDRKHALERFEQEAVAVDSNLRVRELQRKVDGIQKAYDELRLQSEAFKKHSLDLLSKERELNGKLRHLSP.

The segment at 1-40 is disordered; sequence MRAPMLQKQQAPRMDTPPPEERLEKQNEKLNNQEEETEFK. The residue at position 16 (Thr16) is a Phosphothreonine. The segment covering 19-32 has biased composition (basic and acidic residues); the sequence is PEERLEKQNEKLNN. The stretch at 20–351 forms a coiled coil; the sequence is EERLEKQNEK…DELRLQSEAF (332 aa).

Belongs to the CCDC89 family. In terms of assembly, interacts with HEY1.

It is found in the cytoplasm. The protein localises to the nucleus. The chain is Coiled-coil domain-containing protein 89 (CCDC89) from Homo sapiens (Human).